Reading from the N-terminus, the 423-residue chain is Type II methyltransferase M.NgoBV (423 aa).

The SAM-dependent MTase C5-type domain occupies 4 to 423 (IKFIDLFSGM…AVSERLLHTL (420 aa)). The active site involves Cys80.

The protein belongs to the class I-like SAM-binding methyltransferase superfamily. C5-methyltransferase family.

It catalyses the reaction a 2'-deoxycytidine in DNA + S-adenosyl-L-methionine = a 5-methyl-2'-deoxycytidine in DNA + S-adenosyl-L-homocysteine + H(+). In terms of biological role, a methylase, recognizes the double-stranded sequence 5'-GGNNCC-3', methylates C-5 on both strands, and protects the DNA from cleavage by the NgoBV endonuclease. The chain is Type II methyltransferase M.NgoBV (ngoBVM) from Neisseria gonorrhoeae.